Reading from the N-terminus, the 89-residue chain is MEQTVPVRGRKKSWTGKVVSDKMDKACVIAVERRVQHPVYKKYFKKTTRLMVHDENNEAGVGDLVRVVECRPLSKRKSCRLAEIVEKAK.

This sequence belongs to the universal ribosomal protein uS17 family. Part of the 30S ribosomal subunit.

Functionally, one of the primary rRNA binding proteins, it binds specifically to the 5'-end of 16S ribosomal RNA. The chain is Small ribosomal subunit protein uS17 from Chlorobium chlorochromatii (strain CaD3).